A 178-amino-acid polypeptide reads, in one-letter code: MSRIGKRPVTVPSGIEVSLDGTTLVAKKGNLEKRLETHGRVGINIDGSEVTFTRVGDEKQDAAFWGTYRALFNNIMVGLDKGYSKSLEINGVGYRAAVEGKTLKLQLGFSHDVNFEIPEGLDIKVDKNIITVSGTDKQAVGQAAAEIRAYRPPEPYKGKGVKYTDEVIIRKAGKAAGK.

This sequence belongs to the universal ribosomal protein uL6 family. Part of the 50S ribosomal subunit.

This protein binds to the 23S rRNA, and is important in its secondary structure. It is located near the subunit interface in the base of the L7/L12 stalk, and near the tRNA binding site of the peptidyltransferase center. This chain is Large ribosomal subunit protein uL6, found in Sulfurovum sp. (strain NBC37-1).